A 494-amino-acid chain; its full sequence is Succinoglycan biosynthesis transport protein ExoT (494 aa).

Transmembrane regions (helical) follow at residues 16-36 (WSVLSKTGTFGLKFVTVPILA), 44-64 (FGAVAVALTVVQFLAMIGGAG), 82-102 (SVFWANLAIALMMALGLFVFA), 105-125 (LATLLGAPEAAYLLRIMSLLI), 157-177 (LGAVIAVLLALLGFGIWSLLA), 215-235 (FGMMGSEIANFITFQSPMVVI), 253-273 (FASIPNQVVLSAVMGVLFPTF), 297-317 (LLAPMMFGLWALAEPAMLVLF), 321-341 (WAYAWPVLGLLALSKGILTPC), 343-363 (TFIPYLKGVGQGAVLFWWALI), 384-404 (AMIWLCIVNAVTLVGYSWVVF), 421-441 (PMIAALLMALVVRFLLEHFGA), and 447-467 (VLQLIAGTAIGSVIYTVLILL).

This sequence belongs to the polysaccharide synthase family.

It is found in the cell membrane. Its pathway is glycan metabolism; exopolysaccharide biosynthesis. The chain is Succinoglycan biosynthesis transport protein ExoT (exoT) from Rhizobium meliloti (strain 1021) (Ensifer meliloti).